A 423-amino-acid polypeptide reads, in one-letter code: MSSILDELDWRGLIAQSTDRDALAAELAAGPMTLYSGFDPTAPSLHAGHLVPLLTLRRFQQAGHRPIVLAGGATGMIGDPRDTGERTLQTADTVADWADRIRGQLERFVEFDESPTGAIVENNLSWTGALSTIEFLRDVGKYFSVNVMLDRDTVRRRLEGEGISYTEFSYMLLQANDYVQLRKRHGCALQIGGSDQWGNIVAGVRLVRQKLGDTVHAMTTPLVTDSEGKKFGKSTGGGNLWLDPEMTTPYAWYQYFINTADADVVNYLRWFTFLEAGELAELEEATRDRPHQRTAQRRLARELTTLVHGEDATRSVEHASQALFGRGELAALDEPTLAAALREASVAELTPSGPDLITDLLVATGLSASKGAARRTIAEGGVSVNNMKIDSDEWTPQASDFLHGRWLVLRRGKRNIAGVQRVG.

Residue Tyr-35 participates in L-tyrosine binding. Positions 40-49 (PTAPSLHAGH) match the 'HIGH' region motif. L-tyrosine contacts are provided by Tyr-170 and Gln-174. The short motif at 230–234 (KFGKS) is the 'KMSKS' region element. Residue Lys-233 coordinates ATP. One can recognise an S4 RNA-binding domain in the interval 355–412 (DLITDLLVATGLSASKGAARRTIAEGGVSVNNMKIDSDEWTPQASDFLHGRWLVLRRG).

Belongs to the class-I aminoacyl-tRNA synthetase family. TyrS type 1 subfamily. Homodimer.

It is found in the cytoplasm. It catalyses the reaction tRNA(Tyr) + L-tyrosine + ATP = L-tyrosyl-tRNA(Tyr) + AMP + diphosphate + H(+). Functionally, catalyzes the attachment of tyrosine to tRNA(Tyr) in a two-step reaction: tyrosine is first activated by ATP to form Tyr-AMP and then transferred to the acceptor end of tRNA(Tyr). The protein is Tyrosine--tRNA ligase of Mycobacterium sp. (strain KMS).